The chain runs to 152 residues: Transcriptional regulator MraZ (152 aa).

2 SpoVT-AbrB domains span residues 5-52 (ASAI…PFDE) and 81-124 (AHEC…DETA).

This sequence belongs to the MraZ family. In terms of assembly, forms oligomers.

It is found in the cytoplasm. It localises to the nucleoid. This chain is Transcriptional regulator MraZ, found in Shewanella sediminis (strain HAW-EB3).